The sequence spans 100 residues: Urease subunit gamma (100 aa).

Belongs to the urease gamma subunit family. Heterotrimer of UreA (gamma), UreB (beta) and UreC (alpha) subunits. Three heterotrimers associate to form the active enzyme.

The protein localises to the cytoplasm. It carries out the reaction urea + 2 H2O + H(+) = hydrogencarbonate + 2 NH4(+). It participates in nitrogen metabolism; urea degradation; CO(2) and NH(3) from urea (urease route): step 1/1. This is Urease subunit gamma from Flavobacterium johnsoniae (strain ATCC 17061 / DSM 2064 / JCM 8514 / BCRC 14874 / CCUG 350202 / NBRC 14942 / NCIMB 11054 / UW101) (Cytophaga johnsonae).